Consider the following 79-residue polypeptide: U1-plectoxin-Pt1c (79 aa).

The N-terminal stretch at 1-18 (HLILASALICALVVCTFA) is a signal peptide. A propeptide spanning residues 19-31 (EEQVNVPFLPDER) is cleaved from the precursor. Cystine bridges form between Cys35–Cys49, Cys42–Cys55, Cys48–Cys66, Cys52–Cys75, and Cys57–Cys64. A propeptide spanning residues 78–79 (RR) is cleaved from the precursor.

It belongs to the neurotoxin 02 (plectoxin) family. 02 (plectoxin) subfamily. As to expression, expressed by the venom gland.

Its subcellular location is the secreted. Functionally, potent toxin that may paralyze and/or kill insect pests such as H.virescens (lepidoptera), S.exigua (beet armyworm) and M.sexta (tobacco hornworm). This Plectreurys tristis (Spider) protein is U1-plectoxin-Pt1c.